A 279-amino-acid chain; its full sequence is Energy-coupling factor transporter ATP-binding protein EcfA1 (279 aa).

An ABC transporter domain is found at 5–240 (IELNNIQFNY…GEALVEMGLD (236 aa)). Residue 40–47 (GHNGSGKS) participates in ATP binding.

The protein belongs to the ABC transporter superfamily. Energy-coupling factor EcfA family. In terms of assembly, forms a stable energy-coupling factor (ECF) transporter complex composed of 2 membrane-embedded substrate-binding proteins (S component), 2 ATP-binding proteins (A component) and 2 transmembrane proteins (T component).

It localises to the cell membrane. ATP-binding (A) component of a common energy-coupling factor (ECF) ABC-transporter complex. Unlike classic ABC transporters this ECF transporter provides the energy necessary to transport a number of different substrates. This is Energy-coupling factor transporter ATP-binding protein EcfA1 from Enterococcus faecalis (strain ATCC 700802 / V583).